Here is a 56-residue protein sequence, read N- to C-terminus: Stable protein 1 (56 aa).

Positions 1-44 constitute a Stress-response A/B barrel domain; sequence GYTHAFESTFESKSGLQEYLDSAALAAFAEGFLPTLSQRSFNWG.

The chain is Stable protein 1 from Populus euphratica (Euphrates poplar).